A 348-amino-acid chain; its full sequence is Dihydroorotase (348 aa).

Zn(2+) contacts are provided by His14 and His16. Residues His16 to Arg18 and Asn42 contribute to the substrate site. Positions 100, 137, and 175 each coordinate Zn(2+). Lys100 carries the N6-carboxylysine modification. His137 is a binding site for substrate. Leu220 contributes to the substrate binding site. Asp248 serves as a coordination point for Zn(2+). Asp248 is an active-site residue. Substrate is bound by residues His252 and Ala264.

The protein belongs to the metallo-dependent hydrolases superfamily. DHOase family. Class II DHOase subfamily. Homodimer. Zn(2+) is required as a cofactor.

It carries out the reaction (S)-dihydroorotate + H2O = N-carbamoyl-L-aspartate + H(+). Its pathway is pyrimidine metabolism; UMP biosynthesis via de novo pathway; (S)-dihydroorotate from bicarbonate: step 3/3. In terms of biological role, catalyzes the reversible cyclization of carbamoyl aspartate to dihydroorotate. The polypeptide is Dihydroorotase (Pseudomonas paraeruginosa (strain DSM 24068 / PA7) (Pseudomonas aeruginosa (strain PA7))).